We begin with the raw amino-acid sequence, 257 residues long: MFQPAAKRGFTIESLVAKDGGTGGSPGSGGAGSHPLAVAASEEPLRPTALNYPHPSAAETAFVSGFPAAAAAGAGRSLYGGPELVFPEAMNHPALTVHPAHQLGSSSLQPPHSFFSAQHRDPLHFYPWVLRNRFFGHRFQASDVPQDGLLLHGPFARKPKRIRTAFSPSQLLRLERAFEKNHYVVGAERKQLAGSLSLSETQVKVWFQNRRTKYKRQKLEEEGPESEQKKKGSHHINRWRIATKQANGEDIDVTSND.

A DNA-binding region (homeobox) is located at residues 159 to 218; sequence PKRIRTAFSPSQLLRLERAFEKNHYVVGAERKQLAGSLSLSETQVKVWFQNRRTKYKRQK. Positions 216-257 are disordered; it reads RQKLEEEGPESEQKKKGSHHINRWRIATKQANGEDIDVTSND. The segment covering 217 to 230 has biased composition (basic and acidic residues); it reads QKLEEEGPESEQKK.

It belongs to the EMX homeobox family. Interacts with WRD11 (via the N-terminal and the central portion of the protein); the interaction associates EMX1 with GLI3. Cerebral cortex. Expressed in the olfactory bulbs.

The protein localises to the nucleus. Transcription factor, which in cooperation with EMX2, acts to generate the boundary between the roof and archipallium in the developing brain. May function in combinations with OTX1/2 to specify cell fates in the developing central nervous system. In Mus musculus (Mouse), this protein is Homeobox protein EMX1 (Emx1).